Consider the following 302-residue polypeptide: Putative S-adenosyl-L-methionine-dependent methyltransferase MAP_1622c (302 aa).

S-adenosyl-L-methionine contacts are provided by residues aspartate 129 and 158–159 (DL).

It belongs to the UPF0677 family.

Its function is as follows. Exhibits S-adenosyl-L-methionine-dependent methyltransferase activity. The sequence is that of Putative S-adenosyl-L-methionine-dependent methyltransferase MAP_1622c from Mycolicibacterium paratuberculosis (strain ATCC BAA-968 / K-10) (Mycobacterium paratuberculosis).